The primary structure comprises 58 residues: uncharacterized protein (58 aa).

This is an uncharacterized protein from Phaseolus vulgaris (Kidney bean).